A 282-amino-acid chain; its full sequence is Cholesterol 25-hydroxylase-like protein 1, member 1 (282 aa).

An N-linked (GlcNAc...) asparagine glycan is attached at asparagine 3. 3 helical membrane passes run 40–60, 85–107, and 127–147; these read FFPV…FAVL, MLRT…VLIT, and FSGG…WHMV. In terms of domain architecture, Fatty acid hydroxylase spans 133–265; the sequence is ALLVFDTQYF…FSHWDKIFGT (133 aa). The Histidine box-1 signature appears at 144 to 148; that stretch reads WHMVH. Residues 159–163 carry the Histidine box-2 motif; that stretch reads HAIHH. A Histidine box-3 motif is present at residues 240 to 246; the sequence is AHDMHHQ.

This sequence belongs to the sterol desaturase family. Fe cation is required as a cofactor.

Its subcellular location is the endoplasmic reticulum membrane. In terms of biological role, may catalyze the formation of 25-hydroxycholesterol from cholesterol. The chain is Cholesterol 25-hydroxylase-like protein 1, member 1 (ch25hl1.1) from Danio rerio (Zebrafish).